The sequence spans 272 residues: Regulatory protein RecX (272 aa).

The protein belongs to the RecX family.

Its subcellular location is the cytoplasm. Its function is as follows. Modulates RecA activity. This chain is Regulatory protein RecX, found in Staphylococcus saprophyticus subsp. saprophyticus (strain ATCC 15305 / DSM 20229 / NCIMB 8711 / NCTC 7292 / S-41).